Here is a 293-residue protein sequence, read N- to C-terminus: MSGFGGRGVDEKGFLRWLLGELGVEEDDVAYVDGLVVKVDGAAASTSRLPFQTWADFGWRNVAAAYSDVRVKFAEARLLLASVTAPDLGTAAEVVQGVREASQFFSLAYVGGDLNEGRDVVVDVVLVGWARARVGRAPRPGDVLVTIPQFGYTSLAYRFWQMGGAVVERGVEALKRPKPLWPLPPAECVTAAMDSSDGLGDVLWSMARGVDIVVKELPAPREVLEFAAERGLDVGEIVFNGGEEFLPVFAVRRDCPVESPYVSFAEVVPGEGRVWWRGEELKWRGWAYFRGWG.

Glu25, Val39, Asp40, Asp68, and Asp113 together coordinate Mg(2+). ATP-binding positions include 112-113 and Arg136; that span reads GD. Asp194 is a binding site for Mg(2+). Residue Ser196 coordinates ATP. Asp197 contacts Mg(2+). Positions 243 and 286 each coordinate substrate.

It belongs to the thiamine-monophosphate kinase family. As to quaternary structure, homodimer.

The catalysed reaction is thiamine phosphate + ATP = thiamine diphosphate + ADP. Its pathway is cofactor biosynthesis; thiamine diphosphate biosynthesis; thiamine diphosphate from thiamine phosphate: step 1/1. Its activity is regulated as follows. Is inhibited by AMP; the mode of AMP inhibition is uncompetitive for both TMP and ATP. Functionally, catalyzes the ATP-dependent phosphorylation of thiamine-monophosphate (TMP) to form thiamine-pyrophosphate (TPP), the active form of vitamin B1. This Pyrobaculum calidifontis (strain DSM 21063 / JCM 11548 / VA1) protein is Thiamine-monophosphate kinase.